A 571-amino-acid polypeptide reads, in one-letter code: Proline--tRNA ligase (571 aa).

This sequence belongs to the class-II aminoacyl-tRNA synthetase family. ProS type 1 subfamily. In terms of assembly, homodimer.

The protein localises to the cytoplasm. It carries out the reaction tRNA(Pro) + L-proline + ATP = L-prolyl-tRNA(Pro) + AMP + diphosphate. Catalyzes the attachment of proline to tRNA(Pro) in a two-step reaction: proline is first activated by ATP to form Pro-AMP and then transferred to the acceptor end of tRNA(Pro). As ProRS can inadvertently accommodate and process non-cognate amino acids such as alanine and cysteine, to avoid such errors it has two additional distinct editing activities against alanine. One activity is designated as 'pretransfer' editing and involves the tRNA(Pro)-independent hydrolysis of activated Ala-AMP. The other activity is designated 'posttransfer' editing and involves deacylation of mischarged Ala-tRNA(Pro). The misacylated Cys-tRNA(Pro) is not edited by ProRS. In Acinetobacter baumannii (strain AB307-0294), this protein is Proline--tRNA ligase.